We begin with the raw amino-acid sequence, 526 residues long: Phenylacetaldehyde oxime monooxygenase CYP71AN24 (526 aa).

A helical transmembrane segment spans residues 22–42 (SFNIFLVPILCLSIFILFSLT). Cys-465 lines the heme pocket.

It belongs to the cytochrome P450 family. The cofactor is heme. Expressed in seedlings and leaves.

The protein resides in the membrane. It carries out the reaction (E)-phenylacetaldehyde oxime + reduced [NADPH--hemoprotein reductase] + O2 = (R)-mandelonitrile + oxidized [NADPH--hemoprotein reductase] + 2 H2O + H(+). It catalyses the reaction phenylacetonitrile + reduced [NADPH--hemoprotein reductase] + O2 = (R)-mandelonitrile + oxidized [NADPH--hemoprotein reductase] + H2O + H(+). Functionally, involved in L-phenylalanine-derived cyanogenic glycoside biosynthesis, including prunasin and amygdalin defensive agents. Catalyzes the conversion of phenylacetaldoxime (PAOx) and phenylacetonitrile (PAN) into mandelonitrile (MAN). To a lower extent, can convert various aromatic aldoximes and nitriles; mediates the transformation of 4-hydroxyphenylacetaldoxime, 4-hydroxyphenylacetonitrile, indole-3-acetal-doxime and indole-3-acetonitrile into the corresponding hydroxynitriles, but cannot use the aliphatic compounds 2-methylpropanaloxime and 2-methylpropanenitrile as substrates. This is Phenylacetaldehyde oxime monooxygenase CYP71AN24 from Prunus mume (Japanese apricot).